The chain runs to 481 residues: GDP-fucose protein O-fucosyltransferase 3 (481 aa).

The Cytoplasmic portion of the chain corresponds to 1 to 8 (MVRFQRRK). A helical; Signal-anchor for type II membrane protein transmembrane segment spans residues 9-31 (LLASCLCVTATVFLMVTLQVVVE). Residues 32–481 (LGKFERKKLK…EEFWALVFKD (450 aa)) are Lumenal-facing. N-linked (GlcNAc...) asparagine glycans are attached at residues Asn110, Asn168, and Asn318. Cysteines 389 and 392 form a disulfide. Asn468 carries an N-linked (GlcNAc...) asparagine glycan.

This sequence belongs to the glycosyltransferase 10 family. In terms of tissue distribution, widely expressed, with a higher expression in liver and thymus.

The protein localises to the endoplasmic reticulum membrane. It catalyses the reaction L-threonyl-[protein] + GDP-beta-L-fucose = 3-O-(alpha-L-fucosyl)-L-threonyl-[protein] + GDP + H(+). It carries out the reaction L-seryl-[protein] + GDP-beta-L-fucose = 3-O-(alpha-L-fucosyl)-L-seryl-[protein] + GDP + H(+). The protein operates within protein modification; protein glycosylation. In terms of biological role, protein O-fucosyltransferase that specifically catalyzes O-fucosylation of serine or threonine residues in EMI domains of target proteins, such as MMRN1, MMRN2 and EMID1. Attaches fucose through an O-glycosidic linkage. O-fucosylation of EMI domain-containing proteins may be required for facilitating protein folding and secretion. May also show alpha-(1,3)-fucosyltransferase activity toward the innermost N-acetyl glucosamine (GlcNAc) residue in biantennary N-glycan acceptors. However, this was tested with a library of synthetic substrates and this activity is unsure in vivo. May be involved in biosynthesis of Lewis X-carrying biantennary N-glycans that regulate neuron stem cell self-renewal during brain development. In Mus musculus (Mouse), this protein is GDP-fucose protein O-fucosyltransferase 3.